We begin with the raw amino-acid sequence, 273 residues long: Co-chaperone protein DjlA (273 aa).

The Periplasmic portion of the chain corresponds to 1–6 (MHYWGK). The helical transmembrane segment at 7-31 (LLGLIFGVVSGAGFWGIVIGLFIGH) threads the bilayer. The Cytoplasmic portion of the chain corresponds to 32–273 (MLDRASVRGN…DLIKKEKGFK (242 aa)). The region spanning 207 to 273 (DACKVLGVRE…DLIKKEKGFK (67 aa)) is the J domain.

In terms of assembly, homodimer.

It is found in the cell inner membrane. In terms of biological role, regulatory DnaK co-chaperone. Direct interaction between DnaK and DjlA is needed for the induction of the wcaABCDE operon, involved in the synthesis of a colanic acid polysaccharide capsule, possibly through activation of the RcsB/RcsC phosphotransfer signaling pathway. The colanic acid capsule may help the bacterium survive conditions outside the host. The polypeptide is Co-chaperone protein DjlA (Photorhabdus laumondii subsp. laumondii (strain DSM 15139 / CIP 105565 / TT01) (Photorhabdus luminescens subsp. laumondii)).